We begin with the raw amino-acid sequence, 127 residues long: Protein translocase subunit SecE (127 aa).

Over 1-19 (MSANTEAQGSGRGLEAMKW) the chain is Cytoplasmic. A helical transmembrane segment spans residues 20-32 (VVVVALLLVAIVG). The Periplasmic portion of the chain corresponds to 33–48 (NYLYRDIMLPLRALAV). Residues 49 to 60 (VILIAAAGGVAL) form a helical membrane-spanning segment. Topologically, residues 61 to 97 (LTTKGKATVAFAREARTEVRKVIWPTRQETLHTTLIV) are cytoplasmic. Residues 98–115 (AAVTAVMSLILWGLDGIL) traverse the membrane as a helical segment. Over 116–127 (VRLVSFITGLRF) the chain is Periplasmic.

The protein belongs to the SecE/SEC61-gamma family. Component of the Sec protein translocase complex. Heterotrimer consisting of SecY, SecE and SecG subunits. The heterotrimers can form oligomers, although 1 heterotrimer is thought to be able to translocate proteins. Interacts with the ribosome. Interacts with SecDF, and other proteins may be involved. Interacts with SecA.

It is found in the cell inner membrane. Its function is as follows. Essential subunit of the Sec protein translocation channel SecYEG. Clamps together the 2 halves of SecY. May contact the channel plug during translocation. In Escherichia coli O157:H7, this protein is Protein translocase subunit SecE.